The chain runs to 148 residues: Glutamate mutase sigma subunit 2 (148 aa).

The B12-binding domain maps to 1-134; that stretch reads MRTVILGVIG…EALKADLGHR (134 aa). Adenosylcob(III)alamin-binding positions include 11 to 15, histidine 14, 59 to 61, and 90 to 94; these read SDAHV, SSL, and NLAVG. The span at 129–141 shows a compositional bias: basic and acidic residues; the sequence is ADLGHRSREEASS. A disordered region spans residues 129 to 148; sequence ADLGHRSREEASSEKVQLGS.

It belongs to the methylaspartate mutase GlmS subunit family. In terms of assembly, heterotetramer composed of 2 epsilon subunits (GlmE) and 2 sigma subunits (GlmS). GlmE exists as a homodimer and GlmS as a monomer. It depends on adenosylcob(III)alamin as a cofactor.

It catalyses the reaction (2S,3S)-3-methyl-L-aspartate = L-glutamate. It participates in amino-acid degradation; L-glutamate degradation via mesaconate pathway; acetate and pyruvate from L-glutamate: step 1/4. In terms of biological role, catalyzes the carbon skeleton rearrangement of L-glutamate to L-threo-3-methylaspartate ((2S,3S)-3-methylaspartate). The chain is Glutamate mutase sigma subunit 2 from Haloarcula marismortui (strain ATCC 43049 / DSM 3752 / JCM 8966 / VKM B-1809) (Halobacterium marismortui).